The primary structure comprises 1339 residues: Transcription factor tau subunit sfc3 (1339 aa).

A disordered region spans residues 470-515 (MESNAEVSPDGMTLLPRKRGRPRKSANISVTSSPIRPSKNENNLPS). The segment at residues 485-497 (PRKRGRPRKSANI) is a DNA-binding region (a.T hook). The segment covering 495–514 (ANISVTSSPIRPSKNENNLP) has biased composition (polar residues). Phosphoserine occurs at positions 595 and 596. The segment at 791–826 (RRKSMPAEIKRHKESSETKPVDKEEVKKNEKEKDDP) is disordered. Residues 798–826 (EIKRHKESSETKPVDKEEVKKNEKEKDDP) are compositionally biased toward basic and acidic residues.

In terms of assembly, component of the TFIIIC complex including sfc1, sfc3, sfc4, sfc6 and sfc7. The subunits are organized in two globular domains, tauA and tauB, connected by a proteolysis-sensitive and flexible linker. Interacts with sfc1, sfc4 and sfc6.

The protein localises to the nucleus envelope. Functionally, TFIIIC mediates tRNA and 5S RNA gene activation by binding to intragenic promoter elements. Upstream of the transcription start site, TFIIIC assembles the initiation complex TFIIIB-TFIIIC-tDNA, which is sufficient for RNA polymerase III recruitment and function. Part of the tauB domain of TFIIIC that binds boxB DNA promoter sites of tRNA and similar genes. Cooperates with sfc6 in DNA binding. Localizes to chromatin insulator sequence without recruiting RNA polymerase III and plays a role in nuclear organization. This Schizosaccharomyces pombe (strain 972 / ATCC 24843) (Fission yeast) protein is Transcription factor tau subunit sfc3.